We begin with the raw amino-acid sequence, 155 residues long: Ribonuclease H (155 aa).

The RNase H type-1 domain occupies 4 to 145; it reads TEPTVYAYTD…ADRLANRGID (142 aa). Mg(2+) contacts are provided by Asp-13, Glu-51, Asp-73, and Asp-137.

The protein belongs to the RNase H family. As to quaternary structure, monomer. Requires Mg(2+) as cofactor.

It is found in the cytoplasm. The enzyme catalyses Endonucleolytic cleavage to 5'-phosphomonoester.. Its function is as follows. Endonuclease that specifically degrades the RNA of RNA-DNA hybrids. In Methylococcus capsulatus (strain ATCC 33009 / NCIMB 11132 / Bath), this protein is Ribonuclease H.